A 236-amino-acid polypeptide reads, in one-letter code: Biosynthetic peptidoglycan transglycosylase (236 aa).

A helical membrane pass occupies residues 12 to 31 (ALLWFAASSIVLVLVFRWVP).

It belongs to the glycosyltransferase 51 family.

It is found in the cell inner membrane. The catalysed reaction is [GlcNAc-(1-&gt;4)-Mur2Ac(oyl-L-Ala-gamma-D-Glu-L-Lys-D-Ala-D-Ala)](n)-di-trans,octa-cis-undecaprenyl diphosphate + beta-D-GlcNAc-(1-&gt;4)-Mur2Ac(oyl-L-Ala-gamma-D-Glu-L-Lys-D-Ala-D-Ala)-di-trans,octa-cis-undecaprenyl diphosphate = [GlcNAc-(1-&gt;4)-Mur2Ac(oyl-L-Ala-gamma-D-Glu-L-Lys-D-Ala-D-Ala)](n+1)-di-trans,octa-cis-undecaprenyl diphosphate + di-trans,octa-cis-undecaprenyl diphosphate + H(+). The protein operates within cell wall biogenesis; peptidoglycan biosynthesis. Functionally, peptidoglycan polymerase that catalyzes glycan chain elongation from lipid-linked precursors. This chain is Biosynthetic peptidoglycan transglycosylase, found in Pseudomonas putida (strain GB-1).